A 311-amino-acid chain; its full sequence is Ribosomal RNA large subunit methyltransferase F (311 aa).

The protein belongs to the methyltransferase superfamily. METTL16/RlmF family.

The protein resides in the cytoplasm. It carries out the reaction adenosine(1618) in 23S rRNA + S-adenosyl-L-methionine = N(6)-methyladenosine(1618) in 23S rRNA + S-adenosyl-L-homocysteine + H(+). Specifically methylates the adenine in position 1618 of 23S rRNA. This chain is Ribosomal RNA large subunit methyltransferase F, found in Pectobacterium atrosepticum (strain SCRI 1043 / ATCC BAA-672) (Erwinia carotovora subsp. atroseptica).